A 187-amino-acid polypeptide reads, in one-letter code: Elongation factor P (187 aa).

Residue Lys-33 is modified to N6-(3,6-diaminohexanoyl)-5-hydroxylysine.

It belongs to the elongation factor P family. Post-translationally, may be beta-lysylated on the epsilon-amino group of Lys-33 by the combined action of EpmA and EpmB, and then hydroxylated on the C5 position of the same residue by EpmC (if this protein is present). Lysylation is critical for the stimulatory effect of EF-P on peptide-bond formation. The lysylation moiety may extend toward the peptidyltransferase center and stabilize the terminal 3-CCA end of the tRNA. Hydroxylation of the C5 position on Lys-33 may allow additional potential stabilizing hydrogen-bond interactions with the P-tRNA.

It is found in the cytoplasm. Its pathway is protein biosynthesis; polypeptide chain elongation. Its function is as follows. Involved in peptide bond synthesis. Alleviates ribosome stalling that occurs when 3 or more consecutive Pro residues or the sequence PPG is present in a protein, possibly by augmenting the peptidyl transferase activity of the ribosome. Modification of Lys-33 is required for alleviation. The sequence is that of Elongation factor P from Blochmanniella floridana.